We begin with the raw amino-acid sequence, 29 residues long: Cytochrome b6-f complex subunit 8 (29 aa).

A helical transmembrane segment spans residues 3 to 23 (ILSLGWAALMTMFTFSLALTV).

The protein belongs to the PetN family. As to quaternary structure, the 4 large subunits of the cytochrome b6-f complex are cytochrome b6, subunit IV (17 kDa polypeptide, PetD), cytochrome f and the Rieske protein, while the 4 small subunits are PetG, PetL, PetM and PetN. The complex functions as a dimer.

The protein localises to the plastid. It localises to the chloroplast thylakoid membrane. Functionally, component of the cytochrome b6-f complex, which mediates electron transfer between photosystem II (PSII) and photosystem I (PSI), cyclic electron flow around PSI, and state transitions. This is Cytochrome b6-f complex subunit 8 from Phaeodactylum tricornutum (strain CCAP 1055/1).